The primary structure comprises 381 residues: Putative 8-amino-7-oxononanoate synthase (381 aa).

Arg-22 contacts substrate. Residue 109-110 (GF) participates in pyridoxal 5'-phosphate binding. Substrate is bound at residue His-134. Pyridoxal 5'-phosphate contacts are provided by residues Ser-182, 207 to 210 (DDAH), and 233 to 236 (TLSK). An N6-(pyridoxal phosphate)lysine modification is found at Lys-236. Thr-345 is a substrate binding site.

Belongs to the class-II pyridoxal-phosphate-dependent aminotransferase family. BioF subfamily. Homodimer. Pyridoxal 5'-phosphate serves as cofactor.

The catalysed reaction is 6-carboxyhexanoyl-[ACP] + L-alanine + H(+) = (8S)-8-amino-7-oxononanoate + holo-[ACP] + CO2. The protein operates within cofactor biosynthesis; biotin biosynthesis. Its function is as follows. Catalyzes the decarboxylative condensation of pimeloyl-[acyl-carrier protein] and L-alanine to produce 8-amino-7-oxononanoate (AON), [acyl-carrier protein], and carbon dioxide. The polypeptide is Putative 8-amino-7-oxononanoate synthase (bioF) (Acidiphilium cryptum (strain JF-5)).